The chain runs to 624 residues: ADP,ATP carrier protein 1, chloroplastic (624 aa).

The N-terminal 79 residues, 1 to 79 (MEAVIQTRGL…KERSTEFICK (79 aa)), are a transit peptide targeting the chloroplast. An N-acetylalanine modification is found at alanine 80. The next 6 membrane-spanning stretches (helical) occupy residues 108 to 128 (VEVATLKKIIPLGLMFFCILF), 182 to 202 (ALFYTVIVPFIIYFGAFGFVM), 240 to 260 (LFYVMAELWGSVVVSVLFWGF), 315 to 335 (AMMSIVVGMGLAICLLYWWVN), 446 to 466 (LLTGVAFFSLILFGGPFAPLV), and 545 to 565 (LANSTPYLGMILLVIVTAWLA). A disordered region spans residues 579-624 (SEEELEKEMERASSVKIPVVSQDESGNGSLGESPSSSPEKSAPTNL). Low complexity predominate over residues 602 to 624 (ESGNGSLGESPSSSPEKSAPTNL).

The protein belongs to the ADP/ATP translocase tlc (TC 2.A.12.2) family.

It is found in the plastid. It localises to the chloroplast membrane. Its function is as follows. May function as an ATP importer. This Arabidopsis thaliana (Mouse-ear cress) protein is ADP,ATP carrier protein 1, chloroplastic (AATP1).